A 347-amino-acid polypeptide reads, in one-letter code: Probable arabinogalactan endo-beta-1,4-galactanase A (347 aa).

An N-terminal signal peptide occupies residues 1–16 (MLFSYLLATLPLLANA). Glu-150 acts as the Proton donor in catalysis. The active-site Nucleophile is Glu-260.

Belongs to the glycosyl hydrolase 53 family.

The protein localises to the secreted. It catalyses the reaction The enzyme specifically hydrolyzes (1-&gt;4)-beta-D-galactosidic linkages in type I arabinogalactans.. Its function is as follows. Endogalactanase involved in the degradation of plant cell wall polysaccharides, and more particularly of hairy regions of pectin. The polypeptide is Probable arabinogalactan endo-beta-1,4-galactanase A (galA) (Aspergillus flavus (strain ATCC 200026 / FGSC A1120 / IAM 13836 / NRRL 3357 / JCM 12722 / SRRC 167)).